A 1886-amino-acid polypeptide reads, in one-letter code: Nuclear pore membrane glycoprotein 210 (1886 aa).

The first 26 residues, methionine 1–alanine 26, serve as a signal peptide directing secretion. The Perinuclear space segment spans residues lysine 27–glutamine 1808. 12 N-linked (GlcNAc...) asparagine glycosylation sites follow: asparagine 44, asparagine 337, asparagine 405, asparagine 484, asparagine 681, asparagine 801, asparagine 926, asparagine 1039, asparagine 1116, asparagine 1135, asparagine 1362, and asparagine 1441. One can recognise a BIG2 domain in the interval phenylalanine 1078–lysine 1151. A helical membrane pass occupies residues valine 1809 to histidine 1829. Over threonine 1830–histidine 1886 the chain is Cytoplasmic. At serine 1839 the chain carries Phosphoserine. Residue threonine 1844 is modified to Phosphothreonine. 4 positions are modified to phosphoserine: serine 1873, serine 1876, serine 1880, and serine 1885.

This sequence belongs to the NUP210 family. As to quaternary structure, forms dimers and possibly higher-order oligomers. In terms of processing, N-glycosylated, but not all potential glycosylation sites may be used. Contains high-mannose type oligosaccharides. Post-translationally, phosphorylated at Ser-1880 in mitosis specifically; not phosphorylated in interphase.

The protein resides in the nucleus. The protein localises to the nuclear pore complex. Its subcellular location is the nucleus membrane. It is found in the endoplasmic reticulum membrane. In terms of biological role, nucleoporin essential for nuclear pore assembly and fusion, nuclear pore spacing, as well as structural integrity. The chain is Nuclear pore membrane glycoprotein 210 (Nup210) from Mus musculus (Mouse).